Here is a 393-residue protein sequence, read N- to C-terminus: 1-deoxy-D-xylulose 5-phosphate reductoisomerase (393 aa).

NADPH is bound by residues threonine 10, glycine 11, serine 12, isoleucine 13, glutamine 38, and asparagine 124. Position 125 (lysine 125) interacts with 1-deoxy-D-xylulose 5-phosphate. Glutamate 126 contacts NADPH. Aspartate 150 is a binding site for Mn(2+). Residues serine 151, glutamate 152, serine 179, and histidine 202 each contribute to the 1-deoxy-D-xylulose 5-phosphate site. Mn(2+) is bound at residue glutamate 152. Glycine 208 contributes to the NADPH binding site. Positions 215, 220, 221, and 224 each coordinate 1-deoxy-D-xylulose 5-phosphate. Glutamate 224 contacts Mn(2+).

This sequence belongs to the DXR family. The cofactor is Mg(2+). Mn(2+) is required as a cofactor.

The enzyme catalyses 2-C-methyl-D-erythritol 4-phosphate + NADP(+) = 1-deoxy-D-xylulose 5-phosphate + NADPH + H(+). Its pathway is isoprenoid biosynthesis; isopentenyl diphosphate biosynthesis via DXP pathway; isopentenyl diphosphate from 1-deoxy-D-xylulose 5-phosphate: step 1/6. Catalyzes the NADPH-dependent rearrangement and reduction of 1-deoxy-D-xylulose-5-phosphate (DXP) to 2-C-methyl-D-erythritol 4-phosphate (MEP). This is 1-deoxy-D-xylulose 5-phosphate reductoisomerase from Ralstonia nicotianae (strain ATCC BAA-1114 / GMI1000) (Ralstonia solanacearum).